Reading from the N-terminus, the 225-residue chain is UPF0758 protein BAMEG_4721 (225 aa).

The MPN domain maps to 103–225 (SIRSPEDCAT…FVSLKEKGHI (123 aa)). 3 residues coordinate Zn(2+): histidine 174, histidine 176, and aspartate 187. Positions 174–187 (HNHPSGDPAPSRED) match the JAMM motif motif.

The protein belongs to the UPF0758 family.

This Bacillus anthracis (strain CDC 684 / NRRL 3495) protein is UPF0758 protein BAMEG_4721.